The primary structure comprises 288 residues: Bifunctional protein FolD (288 aa).

NADP(+) contacts are provided by residues 166–168 (GAS) and isoleucine 232.

The protein belongs to the tetrahydrofolate dehydrogenase/cyclohydrolase family. In terms of assembly, homodimer.

It catalyses the reaction (6R)-5,10-methylene-5,6,7,8-tetrahydrofolate + NADP(+) = (6R)-5,10-methenyltetrahydrofolate + NADPH. The catalysed reaction is (6R)-5,10-methenyltetrahydrofolate + H2O = (6R)-10-formyltetrahydrofolate + H(+). It participates in one-carbon metabolism; tetrahydrofolate interconversion. Functionally, catalyzes the oxidation of 5,10-methylenetetrahydrofolate to 5,10-methenyltetrahydrofolate and then the hydrolysis of 5,10-methenyltetrahydrofolate to 10-formyltetrahydrofolate. The protein is Bifunctional protein FolD of Salmonella heidelberg (strain SL476).